A 74-amino-acid chain; its full sequence is ATP synthase F(1) complex subunit epsilon, mitochondrial (74 aa).

It belongs to the eukaryotic ATPase epsilon family. Component of the ATP synthase complex composed at least of ATP5F1A/subunit alpha, ATP5F1B/subunit beta, ATP5MC1/subunit c (homooctomer), MT-ATP6/subunit a, MT-ATP8/subunit 8, ATP5ME/subunit e, ATP5MF/subunit f, ATP5MG/subunit g, ATP5MK/subunit k, ATP5MJ/subunit j, ATP5F1C/subunit gamma, ATP5F1D/subunit delta, ATP5F1E/subunit epsilon, ATP5PF/subunit F6, ATP5PB/subunit b, ATP5PD/subunit d, ATP5PO/subunit OSCP. ATP synthase complex consists of a soluble F(1) head domain (subunits alpha(3) and beta(3)) - the catalytic core - and a membrane F(0) domain - the membrane proton channel (subunits c, a, 8, e, f, g, k and j). These two domains are linked by a central stalk (subunits gamma, delta, and epsilon) rotating inside the F1 region and a stationary peripheral stalk (subunits F6, b, d, and OSCP).

It localises to the mitochondrion. The protein localises to the mitochondrion inner membrane. In terms of biological role, subunit epsilon, of the mitochondrial membrane ATP synthase complex (F(1)F(0) ATP synthase or Complex V) that produces ATP from ADP in the presence of a proton gradient across the membrane which is generated by electron transport complexes of the respiratory chain. ATP synthase complex consist of a soluble F(1) head domain - the catalytic core - and a membrane F(1) domain - the membrane proton channel. These two domains are linked by a central stalk rotating inside the F(1) region and a stationary peripheral stalk. During catalysis, ATP synthesis in the catalytic domain of F(1) is coupled via a rotary mechanism of the central stalk subunits to proton translocation. In vivo, can only synthesize ATP although its ATP hydrolase activity can be activated artificially in vitro. May be essential for the assembly of F(1) and may play an important role in the incorporation of the hydrophobic subunit c into the F(1)-c oligomer rotor of the mitochondrial ATP synthase complex. The polypeptide is ATP synthase F(1) complex subunit epsilon, mitochondrial (Dictyostelium discoideum (Social amoeba)).